We begin with the raw amino-acid sequence, 188 residues long: UPF0461 protein C5orf24 homolog (188 aa).

The residue at position 37 (Ser-37) is a Phosphoserine. A Glycyl lysine isopeptide (Lys-Gly) (interchain with G-Cter in SUMO2) cross-link involves residue Lys-75. A disordered region spans residues 79-142; sequence KKKKNLNRSG…GYKVSPGRPP (64 aa). Positions 80 to 92 are enriched in basic residues; the sequence is KKKNLNRSGKRGR. Polar residues predominate over residues 94-107; that stretch reads SGTTKSAGYRTSTG. 2 positions are modified to phosphoserine: Ser-121 and Ser-180. Lys-184 participates in a covalent cross-link: Glycyl lysine isopeptide (Lys-Gly) (interchain with G-Cter in SUMO2).

It belongs to the UPF0461 family.

The polypeptide is UPF0461 protein C5orf24 homolog (Bos taurus (Bovine)).